Consider the following 69-residue polypeptide: Cytochrome c oxidase subunit 8A, mitochondrial (69 aa).

The N-terminal 25 residues, 1–25 (MYVVTPLLLRGLTGSARRLPVPRAQ), are a transit peptide targeting the mitochondrion. Positions 2-19 (YVVTPLLLRGLTGSARRL) match the SIFI-degron motif. At 26–36 (VHSMPPEQKLG) the chain is on the mitochondrial matrix side. A helical transmembrane segment spans residues 37 to 60 (VLELAIGFTSCMVTFLLPAGWIMS). The Mitochondrial intermembrane segment spans residues 61 to 69 (HLESYKKRG).

The protein belongs to the cytochrome c oxidase VIII family. Component of the cytochrome c oxidase (complex IV, CIV), a multisubunit enzyme composed of 14 subunits. The complex is composed of a catalytic core of 3 subunits MT-CO1, MT-CO2 and MT-CO3, encoded in the mitochondrial DNA, and 11 supernumerary subunits COX4I, COX5A, COX5B, COX6A, COX6B, COX6C, COX7A, COX7B, COX7C, COX8 and NDUFA4, which are encoded in the nuclear genome. The complex exists as a monomer or a dimer and forms supercomplexes (SCs) in the inner mitochondrial membrane with NADH-ubiquinone oxidoreductase (complex I, CI) and ubiquinol-cytochrome c oxidoreductase (cytochrome b-c1 complex, complex III, CIII), resulting in different assemblies (supercomplex SCI(1)III(2)IV(1) and megacomplex MCI(2)III(2)IV(2)). In response to mitochondrial stress, the precursor protein is ubiquitinated by the SIFI complex in the cytoplasm before mitochondrial import, leading to its degradation. Within the SIFI complex, UBR4 initiates ubiquitin chain that are further elongated or branched by KCMF1.

The protein localises to the mitochondrion inner membrane. It functions in the pathway energy metabolism; oxidative phosphorylation. Component of the cytochrome c oxidase, the last enzyme in the mitochondrial electron transport chain which drives oxidative phosphorylation. The respiratory chain contains 3 multisubunit complexes succinate dehydrogenase (complex II, CII), ubiquinol-cytochrome c oxidoreductase (cytochrome b-c1 complex, complex III, CIII) and cytochrome c oxidase (complex IV, CIV), that cooperate to transfer electrons derived from NADH and succinate to molecular oxygen, creating an electrochemical gradient over the inner membrane that drives transmembrane transport and the ATP synthase. Cytochrome c oxidase is the component of the respiratory chain that catalyzes the reduction of oxygen to water. Electrons originating from reduced cytochrome c in the intermembrane space (IMS) are transferred via the dinuclear copper A center (CU(A)) of subunit 2 and heme A of subunit 1 to the active site in subunit 1, a binuclear center (BNC) formed by heme A3 and copper B (CU(B)). The BNC reduces molecular oxygen to 2 water molecules using 4 electrons from cytochrome c in the IMS and 4 protons from the mitochondrial matrix. The chain is Cytochrome c oxidase subunit 8A, mitochondrial (COX8A) from Ateles belzebuth (White-bellied spider monkey).